Consider the following 367-residue polypeptide: Alginate lyase (367 aa).

Positions 1 to 24 (MTLLKRISSPALLALALFGGAAHA) are cleaved as a signal peptide. Substrate is bound by residues 63 to 64 (SK), 136 to 137 (HT), and Y254.

The protein belongs to the polysaccharide lyase 5 family.

Its subcellular location is the periplasm. It carries out the reaction Eliminative cleavage of alginate to give oligosaccharides with 4-deoxy-alpha-L-erythro-hex-4-enuronosyl groups at their non-reducing ends and beta-D-mannuronate at their reducing end.. In terms of biological role, catalyzes the depolymerization of alginate by cleaving the beta-1,4 glycosidic bond between two adjacent sugar residues via a beta-elimination mechanism. May serve to degrade mislocalized alginate that is trapped in the periplasmic space. This chain is Alginate lyase, found in Pseudomonas putida (strain GB-1).